A 928-amino-acid polypeptide reads, in one-letter code: DNA mismatch repair protein MutS (928 aa).

613–620 (GPNMAGKS) provides a ligand contact to ATP. The segment covering 854 to 872 (KAKSNKDDHRIDEKTENSS) has biased composition (basic and acidic residues). The disordered stretch occupies residues 854 to 880 (KAKSNKDDHRIDEKTENSSKKHKNKDS).

This sequence belongs to the DNA mismatch repair MutS family.

Functionally, this protein is involved in the repair of mismatches in DNA. It is possible that it carries out the mismatch recognition step. This protein has a weak ATPase activity. The sequence is that of DNA mismatch repair protein MutS from Clostridium beijerinckii (strain ATCC 51743 / NCIMB 8052) (Clostridium acetobutylicum).